The sequence spans 537 residues: Chaperonin GroEL 2 (537 aa).

ATP is bound by residues 29-32, 86-90, Gly-412, and Asp-495; these read TLGP and DGTTT.

Belongs to the chaperonin (HSP60) family. In terms of assembly, forms a cylinder of 14 subunits composed of two heptameric rings stacked back-to-back. Interacts with the co-chaperonin GroES.

It localises to the cytoplasm. The catalysed reaction is ATP + H2O + a folded polypeptide = ADP + phosphate + an unfolded polypeptide.. Together with its co-chaperonin GroES, plays an essential role in assisting protein folding. The GroEL-GroES system forms a nano-cage that allows encapsulation of the non-native substrate proteins and provides a physical environment optimized to promote and accelerate protein folding. This Paenarthrobacter aurescens (strain TC1) protein is Chaperonin GroEL 2.